A 147-amino-acid polypeptide reads, in one-letter code: Fluoride-specific ion channel FluC 1 (147 aa).

Helical transmembrane passes span 29–49 (YVYIFIGGALGALLRYLISFL), 61–81 (IANLTGAFVMGLLTALTIAFF), 90–110 (AITTGFLGALTTFSTFQLELI), and 118–138 (FITLLLYAVTSYVFGILLCYV). Residues Gly97 and Thr100 each contribute to the Na(+) site.

It belongs to the fluoride channel Fluc/FEX (TC 1.A.43) family.

It is found in the cell membrane. The enzyme catalyses fluoride(in) = fluoride(out). Na(+) is not transported, but it plays an essential structural role and its presence is essential for fluoride channel function. Fluoride-specific ion channel. Important for reducing fluoride concentration in the cell, thus reducing its toxicity. In Staphylococcus aureus (strain Mu50 / ATCC 700699), this protein is Fluoride-specific ion channel FluC 1.